The following is a 261-amino-acid chain: Triosephosphate isomerase (261 aa).

10–12 (NWK) serves as a coordination point for substrate. Catalysis depends on His100, which acts as the Electrophile. The active-site Proton acceptor is the Glu172. Substrate is bound by residues Gly178, Ser218, and 239-240 (GG).

This sequence belongs to the triosephosphate isomerase family. In terms of assembly, homodimer.

The protein localises to the cytoplasm. The catalysed reaction is D-glyceraldehyde 3-phosphate = dihydroxyacetone phosphate. It functions in the pathway carbohydrate biosynthesis; gluconeogenesis. Its pathway is carbohydrate degradation; glycolysis; D-glyceraldehyde 3-phosphate from glycerone phosphate: step 1/1. Functionally, involved in the gluconeogenesis. Catalyzes stereospecifically the conversion of dihydroxyacetone phosphate (DHAP) to D-glyceraldehyde-3-phosphate (G3P). This chain is Triosephosphate isomerase, found in Mycolicibacterium paratuberculosis (strain ATCC BAA-968 / K-10) (Mycobacterium paratuberculosis).